The following is a 92-amino-acid chain: Small ribosomal subunit protein uS19c (92 aa).

This sequence belongs to the universal ribosomal protein uS19 family.

It is found in the plastid. Its subcellular location is the chloroplast. Its function is as follows. Protein S19 forms a complex with S13 that binds strongly to the 16S ribosomal RNA. In Platanus occidentalis (Sycamore), this protein is Small ribosomal subunit protein uS19c.